We begin with the raw amino-acid sequence, 942 residues long: Isoleucine--tRNA ligase (942 aa).

A 'HIGH' region motif is present at residues 58–68 (PYVNGSIHLGH). L-isoleucyl-5'-AMP is bound at residue E564. The short motif at 605–609 (KMSKS) is the 'KMSKS' region element. K608 is a binding site for ATP. Zn(2+) contacts are provided by C905, C908, C925, and C928.

The protein belongs to the class-I aminoacyl-tRNA synthetase family. IleS type 1 subfamily. Monomer. It depends on Zn(2+) as a cofactor.

The protein localises to the cytoplasm. The enzyme catalyses tRNA(Ile) + L-isoleucine + ATP = L-isoleucyl-tRNA(Ile) + AMP + diphosphate. Its function is as follows. Catalyzes the attachment of isoleucine to tRNA(Ile). As IleRS can inadvertently accommodate and process structurally similar amino acids such as valine, to avoid such errors it has two additional distinct tRNA(Ile)-dependent editing activities. One activity is designated as 'pretransfer' editing and involves the hydrolysis of activated Val-AMP. The other activity is designated 'posttransfer' editing and involves deacylation of mischarged Val-tRNA(Ile). The protein is Isoleucine--tRNA ligase of Blochmanniella pennsylvanica (strain BPEN).